A 61-amino-acid chain; its full sequence is Small ribosomal subunit protein uS14 (61 aa).

Cys24, Cys27, Cys40, and Cys43 together coordinate Zn(2+).

It belongs to the universal ribosomal protein uS14 family. Zinc-binding uS14 subfamily. In terms of assembly, part of the 30S ribosomal subunit. Contacts proteins S3 and S10. Zn(2+) is required as a cofactor.

In terms of biological role, binds 16S rRNA, required for the assembly of 30S particles and may also be responsible for determining the conformation of the 16S rRNA at the A site. The chain is Small ribosomal subunit protein uS14 from Thermus aquaticus.